Reading from the N-terminus, the 95-residue chain is Aspartyl/glutamyl-tRNA(Asn/Gln) amidotransferase subunit C (95 aa).

It belongs to the GatC family. As to quaternary structure, heterotrimer of A, B and C subunits.

The enzyme catalyses L-glutamyl-tRNA(Gln) + L-glutamine + ATP + H2O = L-glutaminyl-tRNA(Gln) + L-glutamate + ADP + phosphate + H(+). It catalyses the reaction L-aspartyl-tRNA(Asn) + L-glutamine + ATP + H2O = L-asparaginyl-tRNA(Asn) + L-glutamate + ADP + phosphate + 2 H(+). Its function is as follows. Allows the formation of correctly charged Asn-tRNA(Asn) or Gln-tRNA(Gln) through the transamidation of misacylated Asp-tRNA(Asn) or Glu-tRNA(Gln) in organisms which lack either or both of asparaginyl-tRNA or glutaminyl-tRNA synthetases. The reaction takes place in the presence of glutamine and ATP through an activated phospho-Asp-tRNA(Asn) or phospho-Glu-tRNA(Gln). The polypeptide is Aspartyl/glutamyl-tRNA(Asn/Gln) amidotransferase subunit C (Ruegeria pomeroyi (strain ATCC 700808 / DSM 15171 / DSS-3) (Silicibacter pomeroyi)).